Reading from the N-terminus, the 775-residue chain is Transposon TX1 uncharacterized 82 kDa protein (775 aa).

Residues 1–10 show a composition bias toward basic and acidic residues; it reads MGGNKKESYK. Disordered regions lie at residues 1–46, 256–277, and 535–565; these read MGGN…ASTS, PKGQ…KTSY, and PIQD…TSTV. Residues 35 to 46 are compositionally biased toward polar residues; sequence EPMSKSPIASTS. Over residues 539 to 549 the composition is skewed to basic and acidic residues; it reads PADKTAGKDGE.

This is Transposon TX1 uncharacterized 82 kDa protein from Xenopus laevis (African clawed frog).